The primary structure comprises 426 residues: Tryptophan--tRNA ligase (426 aa).

The short motif at 66–74 (PSGEMHLGN) is the 'HIGH' region element. The short motif at 314-318 (KMSSS) is the 'KMSKS' region element.

The protein belongs to the class-I aminoacyl-tRNA synthetase family.

It is found in the cytoplasm. It catalyses the reaction tRNA(Trp) + L-tryptophan + ATP = L-tryptophyl-tRNA(Trp) + AMP + diphosphate + H(+). The chain is Tryptophan--tRNA ligase from Thermoplasma acidophilum (strain ATCC 25905 / DSM 1728 / JCM 9062 / NBRC 15155 / AMRC-C165).